A 260-amino-acid chain; its full sequence is 5'-nucleotidase SurE (260 aa).

A divalent metal cation contacts are provided by Asp-8, Asp-9, Ser-43, and Asn-96.

This sequence belongs to the SurE nucleotidase family. The cofactor is a divalent metal cation.

Its subcellular location is the cytoplasm. The enzyme catalyses a ribonucleoside 5'-phosphate + H2O = a ribonucleoside + phosphate. In terms of biological role, nucleotidase that shows phosphatase activity on nucleoside 5'-monophosphates. This chain is 5'-nucleotidase SurE, found in Ruegeria sp. (strain TM1040) (Silicibacter sp.).